The primary structure comprises 181 residues: Shikimate kinase (181 aa).

17-22 (GVGKTT) contributes to the ATP binding site. Thr21 serves as a coordination point for Mg(2+). Substrate contacts are provided by Asp39, Arg63, and Gly85. Position 122 (Arg122) interacts with ATP. Residue Arg141 participates in substrate binding.

This sequence belongs to the shikimate kinase family. Monomer. It depends on Mg(2+) as a cofactor.

Its subcellular location is the cytoplasm. It carries out the reaction shikimate + ATP = 3-phosphoshikimate + ADP + H(+). The protein operates within metabolic intermediate biosynthesis; chorismate biosynthesis; chorismate from D-erythrose 4-phosphate and phosphoenolpyruvate: step 5/7. In terms of biological role, catalyzes the specific phosphorylation of the 3-hydroxyl group of shikimic acid using ATP as a cosubstrate. The protein is Shikimate kinase of Nostoc punctiforme (strain ATCC 29133 / PCC 73102).